Here is a 271-residue protein sequence, read N- to C-terminus: MENIKIIIASDSIGETAELVARACISQFNPKECKHEFLRYPYIETKEDIDEVIQVANDRNAIIVYTLVKPEMKTYMESKIGTNKLRSIDIMGPLMGYLKDAFEENPYNQPGRVHRLDDAYFKKIDAIEFAVKYDDGKDPKGLPKADIVLIGVSRTSKTPLSQYLAHKSYKVMNVPIVPEVTPPDMLFDIDSSKCIALRISEEKLNRIRKQRLKQLGLGDSARYANEIRIKEEIKYFEDIVDRIGCAVIDVSDKAIEETANDVINIIESQSK.

151 to 158 (GVSRTSKT) serves as a coordination point for ADP.

It belongs to the pyruvate, phosphate/water dikinase regulatory protein family. PDRP subfamily.

The catalysed reaction is N(tele)-phospho-L-histidyl/L-threonyl-[pyruvate, phosphate dikinase] + ADP = N(tele)-phospho-L-histidyl/O-phospho-L-threonyl-[pyruvate, phosphate dikinase] + AMP + H(+). It catalyses the reaction N(tele)-phospho-L-histidyl/O-phospho-L-threonyl-[pyruvate, phosphate dikinase] + phosphate + H(+) = N(tele)-phospho-L-histidyl/L-threonyl-[pyruvate, phosphate dikinase] + diphosphate. In terms of biological role, bifunctional serine/threonine kinase and phosphorylase involved in the regulation of the pyruvate, phosphate dikinase (PPDK) by catalyzing its phosphorylation/dephosphorylation. In Staphylococcus haemolyticus (strain JCSC1435), this protein is Putative pyruvate, phosphate dikinase regulatory protein 2.